The following is a 196-amino-acid chain: MSGIKSDTEHNNNNIEEEVRTLFVSGLPIDIKPRELYLLFRPFKGYEGSLIKLTSKQPVGFVTFDNRAGAEAAKNALNGIRFDPENPQTLRLEFAKANTKMAKNKLMATPNPTNFHPALGAHFIARDPYDFTGAALIPASPEAWAPYPLYTAELAPAIPHAAFTYPAAAAAALHAQMRWYPPSEATQQGWKSRQFC.

The 78-residue stretch at 20–97 (RTLFVSGLPI…QTLRLEFAKA (78 aa)) folds into the RRM domain. Positions 30–40 (DIKPRELYLLF) are important for homodimerization.

In terms of assembly, homodimer. As to expression, expressed in developing heart, pronephros, retina and epiphysis. In adult, high expression in heart, moderate in kidney, undetectable in liver, lung and skeletal muscle.

The protein resides in the cytoplasm. It is found in the nucleus. The protein localises to the stress granule. RNA-binding protein involved in the regulation of smooth muscle cell differentiation and proliferation in the gastrointestinal system. Binds NOG mRNA, the major inhibitor of the bone morphogenetic protein (BMP) pathway. Mediates an increase of NOG mRNA levels, thereby contributing to the negative regulation of BMP signaling pathway and promoting reversible dedifferentiation and proliferation of smooth muscle cells. Acts as a pre-mRNA alternative splicing regulator. Mediates ACTN1 and FLNB alternative splicing. Likely binds to mRNA tandem CAC trinucleotide or CA dinucleotide motifs. The protein is RNA-binding protein with multiple splicing 2 of Xenopus laevis (African clawed frog).